A 430-amino-acid chain; its full sequence is MKTQMNYAKEGVFTKEMQIVAQKENLSKDFLLENIACGKIIIPANINHKSLDPNGIGFGLRTKVNVNLGVSNDCVDYSEEMKKVELAHKFDIEAIMDLSNYGKTSRFRDELVNVSKAMIGTVPVYDAVGFLEKDLKQIGAKDFLDVVYHHAKSGVDFMTIHAGINSRAAHIFKQSKRLTNIVSRGGSVLYAWMMMKDAENPFFEYYDDLLDICLKYDVTLSLGDALRPGSTHDASDGAQISELIELSLLTQRAWDVGVQVMIEGPGHMAINEIEVNMQLEKRLCKGAPFYVLGPLVTDIGAGYDHISGAIGGAVAAASGADMLCYVTPAEHLRLPNLEDVREGIVATKIAAHAGDIAKLPKERARDDEMSKARQEIDWEKMFKLAIDGEKAKKMFNERRPDDLNSCSMCGKMCAMNTMNQILKGEDVSLA.

Residues N67, M96, Y125, H161, 183–185, 224–227, and E263 contribute to the substrate site; these read SRG and DALR. Residue H267 coordinates Zn(2+). Y290 provides a ligand contact to substrate. H331 is a Zn(2+) binding site. C406, C409, and C413 together coordinate [4Fe-4S] cluster.

The protein belongs to the ThiC family. Homodimer. The cofactor is [4Fe-4S] cluster.

It carries out the reaction 5-amino-1-(5-phospho-beta-D-ribosyl)imidazole + S-adenosyl-L-methionine = 4-amino-2-methyl-5-(phosphooxymethyl)pyrimidine + CO + 5'-deoxyadenosine + formate + L-methionine + 3 H(+). The protein operates within cofactor biosynthesis; thiamine diphosphate biosynthesis. In terms of biological role, catalyzes the synthesis of the hydroxymethylpyrimidine phosphate (HMP-P) moiety of thiamine from aminoimidazole ribotide (AIR) in a radical S-adenosyl-L-methionine (SAM)-dependent reaction. The chain is Phosphomethylpyrimidine synthase from Campylobacter jejuni subsp. jejuni serotype O:6 (strain 81116 / NCTC 11828).